A 366-amino-acid polypeptide reads, in one-letter code: Fructose-bisphosphate aldolase 1 (366 aa).

Residues Arg-56 and Lys-147 each coordinate substrate. Catalysis depends on Glu-189, which acts as the Proton acceptor. Lys-231 functions as the Schiff-base intermediate with dihydroxyacetone-P in the catalytic mechanism.

This sequence belongs to the class I fructose-bisphosphate aldolase family. As to expression, ubiquitous.

The enzyme catalyses beta-D-fructose 1,6-bisphosphate = D-glyceraldehyde 3-phosphate + dihydroxyacetone phosphate. Its pathway is carbohydrate degradation; glycolysis; D-glyceraldehyde 3-phosphate and glycerone phosphate from D-glucose: step 4/4. Functionally, may be involved in the metabolism of fructose-bisphosphate (beta-D-fructose 1,6-bisphosphate) and of fructose 1-phosphate. In Caenorhabditis elegans, this protein is Fructose-bisphosphate aldolase 1 (aldo-1).